Reading from the N-terminus, the 300-residue chain is MQTQDQALEVAKVLTEALPYIQRFTGKTIVVKFGGNAMTDTELQNSFARDIVLMKLVGMNPIVVHGGGPQIGDLLKKLNIESSFVDGMRVTDSATMDVVEMVLGGTVNKQIVSLINRNGGQAIGVTGKDGNLIHAKKLTVNRKSPEVQASEIIDIGHVGEVKTINRSVIDVLVNSDFIPVIAPIGVGDDGASYNINADLVAGKVAEVLQAEKLMLLTNVAGLQDKSGQVLTGLTTGRVDELIADGTIYGGMLPKISCALDAVKCGVKSAHIIDGRVPHAVLLEIFTDSGVGTLITNEYSA.

Substrate-binding positions include 67-68 (GG), R89, and N194.

Belongs to the acetylglutamate kinase family. ArgB subfamily.

It localises to the cytoplasm. The enzyme catalyses N-acetyl-L-glutamate + ATP = N-acetyl-L-glutamyl 5-phosphate + ADP. The protein operates within amino-acid biosynthesis; L-arginine biosynthesis; N(2)-acetyl-L-ornithine from L-glutamate: step 2/4. Its function is as follows. Catalyzes the ATP-dependent phosphorylation of N-acetyl-L-glutamate. This is Acetylglutamate kinase from Saccharophagus degradans (strain 2-40 / ATCC 43961 / DSM 17024).